We begin with the raw amino-acid sequence, 208 residues long: Outer-membrane lipoprotein carrier protein (208 aa).

Residues 1–24 form the signal peptide; that stretch reads MRMNIVQKILSATCFALLPLLAHA.

Belongs to the LolA family. As to quaternary structure, monomer.

It is found in the periplasm. Its function is as follows. Participates in the translocation of lipoproteins from the inner membrane to the outer membrane. Only forms a complex with a lipoprotein if the residue after the N-terminal Cys is not an aspartate (The Asp acts as a targeting signal to indicate that the lipoprotein should stay in the inner membrane). This Dechloromonas aromatica (strain RCB) protein is Outer-membrane lipoprotein carrier protein.